Consider the following 96-residue polypeptide: MSAVLSTENGLILKLYIQPKASRDQIVGLHGDELKVAITAPPVDGQANAHLVKFIAKQFRVAKSQVIIEKGELGRHKQIKVINPQQIPPEVTILLK.

Belongs to the UPF0235 family.

The polypeptide is UPF0235 protein YpsIP31758_0827 (Yersinia pseudotuberculosis serotype O:1b (strain IP 31758)).